The chain runs to 640 residues: Threonine--tRNA ligase (640 aa).

Residues Met1–Thr59 form the TGS domain. The tract at residues Asp240–Pro531 is catalytic. Zn(2+) is bound by residues Cys332, His383, and His508.

This sequence belongs to the class-II aminoacyl-tRNA synthetase family. In terms of assembly, homodimer. The cofactor is Zn(2+).

Its subcellular location is the cytoplasm. It carries out the reaction tRNA(Thr) + L-threonine + ATP = L-threonyl-tRNA(Thr) + AMP + diphosphate + H(+). In terms of biological role, catalyzes the attachment of threonine to tRNA(Thr) in a two-step reaction: L-threonine is first activated by ATP to form Thr-AMP and then transferred to the acceptor end of tRNA(Thr). Also edits incorrectly charged L-seryl-tRNA(Thr). The protein is Threonine--tRNA ligase of Thermotoga neapolitana (strain ATCC 49049 / DSM 4359 / NBRC 107923 / NS-E).